The primary structure comprises 90 residues: Small ribosomal subunit protein uS15c (90 aa).

The protein belongs to the universal ribosomal protein uS15 family. In terms of assembly, part of the 30S ribosomal subunit.

Its subcellular location is the plastid. The protein localises to the chloroplast. This is Small ribosomal subunit protein uS15c (rps15) from Platanus occidentalis (Sycamore).